The sequence spans 865 residues: Bifunctional uridylyltransferase/uridylyl-removing enzyme (865 aa).

The tract at residues 1 to 318 (MPHVDLNPLK…FPRPDSDARL (318 aa)) is uridylyltransferase. Positions 319–675 (IDDDFRNLRE…VRPTEHGEGL (357 aa)) are uridylyl-removing. An HD domain is found at 437-559 (VDQHTLAVVR…VGDERRLAAL (123 aa)). ACT domains are found at residues 676–762 (QVMV…RLPH) and 789–865 (RLSV…QQAA). The segment at 747 to 767 (DPHAARHAHAPRRLPHSHARR) is disordered. Residues 751–767 (ARHAHAPRRLPHSHARR) show a composition bias toward basic residues.

The protein belongs to the GlnD family. It depends on Mg(2+) as a cofactor.

The enzyme catalyses [protein-PII]-L-tyrosine + UTP = [protein-PII]-uridylyl-L-tyrosine + diphosphate. It carries out the reaction [protein-PII]-uridylyl-L-tyrosine + H2O = [protein-PII]-L-tyrosine + UMP + H(+). With respect to regulation, uridylyltransferase (UTase) activity is inhibited by glutamine, while glutamine activates uridylyl-removing (UR) activity. Its function is as follows. Modifies, by uridylylation and deuridylylation, the PII regulatory proteins (GlnB and homologs), in response to the nitrogen status of the cell that GlnD senses through the glutamine level. Under low glutamine levels, catalyzes the conversion of the PII proteins and UTP to PII-UMP and PPi, while under higher glutamine levels, GlnD hydrolyzes PII-UMP to PII and UMP (deuridylylation). Thus, controls uridylylation state and activity of the PII proteins, and plays an important role in the regulation of nitrogen assimilation and metabolism. This Bordetella bronchiseptica (strain ATCC BAA-588 / NCTC 13252 / RB50) (Alcaligenes bronchisepticus) protein is Bifunctional uridylyltransferase/uridylyl-removing enzyme.